The chain runs to 536 residues: uncharacterized protein (536 aa).

Disordered stretches follow at residues 1–76 and 204–237; these read MSFT…SPAS and NWNS…SNKS. 2 stretches are compositionally biased toward low complexity: residues 7–76 and 204–234; these read TSSV…SPAS and NWNS…PSKS. Residues 247-267 form a helical membrane-spanning segment; the sequence is CSVAIPVGVVLILIGLGIFLW. Disordered regions lie at residues 287–354 and 373–536; these read YGFN…LLGG and DASD…LNLF. The span at 290-326 shows a compositional bias: polar residues; it reads NPNQPSNFRSPNRAPSTNNRYRGWNGSPTPAAGNNTN. The span at 327–350 shows a compositional bias: low complexity; that stretch reads GRPVAPRPSAGAGGANPPAASQPG. Residues 351–371 form a helical membrane-spanning segment; that stretch reads LLGGSSNSAGPIAAATAAGVG. A compositionally biased stretch (polar residues) spans 403 to 424; the sequence is SASNEAEATMPPSNGSNFSEGL. Low complexity predominate over residues 430-454; the sequence is ESGPAVGAAGAAAEAAEHSGSGSDS. The span at 480–509 shows a compositional bias: polar residues; that stretch reads SYGSRAALSSRSQSNLLSPTSTGASNQPNY. The span at 517 to 527 shows a compositional bias: low complexity; it reads SSSNVSIPRSS.

Its subcellular location is the membrane. This is an uncharacterized protein from Schizosaccharomyces pombe (strain 972 / ATCC 24843) (Fission yeast).